The primary structure comprises 520 residues: Pleckstrin homology domain-containing family A member 8 (520 aa).

In terms of domain architecture, PH spans 1-93; the sequence is MEGVLYKWTN…WLVALGSAKA (93 aa). Thr139 carries the post-translational modification Phosphothreonine. Residue Ser145 is modified to Phosphoserine. Thr153 carries the post-translational modification Phosphothreonine. The span at 275–285 shows a compositional bias: basic and acidic residues; that stretch reads GEESLGNHDSD. Residues 275 to 305 form a disordered region; that stretch reads GEESLGNHDSDLAQPELHSTSSSPESHWEED. Residues 311-520 are glycolipid transfer protein homology domain; the sequence is TFFSTMNTSF…VHGLESDEVV (210 aa).

As to quaternary structure, homodimer. Interacts with ARF1; the interaction together with phosphatidylinositol 4-phosphate binding is required for FAPP2 GlcCer transfer ability.

It is found in the cytoplasm. Its subcellular location is the golgi apparatus. The protein localises to the trans-Golgi network membrane. The protein resides in the membrane. Cargo transport protein that is required for apical transport from the trans-Golgi network (TGN). Transports AQP2 from the trans-Golgi network (TGN) to sites of AQP2 phosphorylation. Mediates the non-vesicular transport of glucosylceramide (GlcCer) from the trans-Golgi network (TGN) to the plasma membrane and plays a pivotal role in the synthesis of complex glycosphingolipids. Binding of both phosphatidylinositol 4-phosphate (PIP) and ARF1 are essential for the GlcCer transfer ability. Also required for primary cilium formation, possibly by being involved in the transport of raft lipids to the apical membrane, and for membrane tubulation. The protein is Pleckstrin homology domain-containing family A member 8 (PLEKHA8) of Bos taurus (Bovine).